Here is a 195-residue protein sequence, read N- to C-terminus: Heterogeneous nuclear ribonucleoprotein A/B (195 aa).

The disordered stretch occupies residues 1–23; sequence EEVADGQAHGEXVYREEHHEGEK. Positions 12 to 23 are enriched in basic and acidic residues; that stretch reads XVYREEHHEGEK. An RRM domain is found at 32 to 48; that stretch reads EETKLFVGALSWETTEK. An asymmetric dimethylarginine mark is found at Arg119 and Arg122. Residue Ser173 is modified to Phosphoserine; by CK2.

In terms of processing, extensively phosphorylated on tyrosine residues.

It localises to the cytoplasm. The protein resides in the nucleus. In terms of biological role, may regulate mRNA translation and stability. It binds to poly(A) and poly(U) regions of RNA. This binding is inhibited when the protein is phosphorylated. The sequence is that of Heterogeneous nuclear ribonucleoprotein A/B from Artemia salina (Brine shrimp).